Here is a 337-residue protein sequence, read N- to C-terminus: Protein BIG GRAIN 1-like (337 aa).

Disordered regions lie at residues 1-32, 120-163, and 179-235; these read MRDMEMRWAAPAPAARGRGRARRRAPDQPSFS, SAAG…RPAS, and KRPS…PSRS. Residues 137–146 show a composition bias toward basic and acidic residues; it reads HEQPDVEKTA. Composition is skewed to low complexity over residues 150-163 and 195-209; these read PGSASARACRRPAS and PACSTAPPSSSSSYA.

Belongs to the BIG GRAIN 1 (BG1) plant protein family.

The protein resides in the cell membrane. Its function is as follows. Involved in auxin transport. Regulator of the auxin signaling pathway. This chain is Protein BIG GRAIN 1-like, found in Oryza sativa subsp. japonica (Rice).